The chain runs to 178 residues: 3-hydroxyacyl-[acyl-carrier-protein] dehydratase FabZ (178 aa).

The active site involves histidine 54.

It belongs to the thioester dehydratase family. FabZ subfamily.

It localises to the cytoplasm. It catalyses the reaction a (3R)-hydroxyacyl-[ACP] = a (2E)-enoyl-[ACP] + H2O. Its function is as follows. Involved in unsaturated fatty acids biosynthesis. Catalyzes the dehydration of short chain beta-hydroxyacyl-ACPs and long chain saturated and unsaturated beta-hydroxyacyl-ACPs. In Yersinia enterocolitica, this protein is 3-hydroxyacyl-[acyl-carrier-protein] dehydratase FabZ.